The sequence spans 353 residues: Inactive ubiquitin thioesterase OTULINL (353 aa).

The required for membrane binding stretch occupies residues 1-80 (MKATRSAPRE…KWWIGYLQRK (80 aa)). The region spanning 125 to 353 (KCVRPVKRDN…NDHQYHIPVF (229 aa)) is the OTU domain.

Belongs to the peptidase C65 family. Otulin subfamily. In terms of assembly, does not bind ubiquitin or ubiquitin-like proteins.

The protein resides in the cytoplasm. Its subcellular location is the endoplasmic reticulum membrane. The protein localises to the nucleus envelope. In terms of biological role, lacks deubiquitinase activity. The chain is Inactive ubiquitin thioesterase OTULINL from Rattus norvegicus (Rat).